Reading from the N-terminus, the 323-residue chain is Acetyl esterase (323 aa).

The short motif at 91–93 (HGG) is the Involved in the stabilization of the negatively charged intermediate by the formation of the oxyanion hole element. Active-site residues include serine 165, aspartate 262, and histidine 292.

This sequence belongs to the 'GDXG' lipolytic enzyme family. In terms of assembly, homodimer. Interacts with MalT and MelA.

The protein localises to the cytoplasm. Its function is as follows. Displays esterase activity towards short chain fatty esters (acyl chain length of up to 8 carbons). Able to hydrolyze triacetylglycerol (triacetin) and tributyrylglycerol (tributyrin), but not trioleylglycerol (triolein) or cholesterol oleate. Negatively regulates MalT activity by antagonizing maltotriose binding. Inhibits MelA galactosidase activity. In Salmonella typhi, this protein is Acetyl esterase.